A 105-amino-acid polypeptide reads, in one-letter code: dATP/dGTP diphosphohydrolase (105 aa).

It belongs to the Caudovirales dATP/dGTP diphosphohydrolase family. Requires Co(2+) as cofactor.

It carries out the reaction dGTP + H2O = dGMP + diphosphate + H(+). The catalysed reaction is dATP + H2O = dAMP + diphosphate + H(+). It functions in the pathway purine metabolism. Its function is as follows. Catalyzes the hydrolysis of dGTP into dGMP, which is needed among other for the first step of biosynthesis of dZTP (2-amino-2'-deoxyadenosine-5'-triphosphate). The protein is dATP/dGTP diphosphohydrolase of Cyanophage S-2L (Cyanobacteria phage S-2L).